The following is a 349-amino-acid chain: GDSL esterase/lipase At1g58525 (349 aa).

The signal sequence occupies residues 1-19 (MKLQILLLALVLIAVEANA). The N-linked (GlcNAc...) asparagine glycan is linked to Asn-25. The Nucleophile role is filled by Ser-37. Asn-316 carries N-linked (GlcNAc...) asparagine glycosylation. Catalysis depends on residues Asp-324 and His-327.

This sequence belongs to the 'GDSL' lipolytic enzyme family.

It localises to the secreted. This chain is GDSL esterase/lipase At1g58525, found in Arabidopsis thaliana (Mouse-ear cress).